The chain runs to 860 residues: Nucleolar MIF4G domain-containing protein 1 (860 aa).

Disordered regions lie at residues 1–172 (MAAS…AARK), 191–211 (RCLG…PLSF), and 226–339 (GKNS…EKYI). The interval 1–269 (MAASRSAGEA…EEEEEGDVEK (269 aa)) is necessary for nucleolar localization and for targeting PPP1CA to the nucleolus. Residues 20-31 (VRMKRRGGRGPR) are compositionally biased toward basic residues. Residue Ser-57 is modified to Phosphoserine. Residues 77-99 (GGRKSRKELRKEKRHLRKARRLQ) are compositionally biased toward basic residues. A compositionally biased stretch (basic and acidic residues) spans 115–131 (GAEEASGHRQDTEERAR). At Ser-139 the chain carries Phosphoserine. Over residues 142–151 (RKPRPSRVKA) the composition is skewed to basic residues. A compositionally biased stretch (low complexity) spans 152–169 (KATAATAKTRPSAAATAA). 2 stretches are compositionally biased toward acidic residues: residues 249 to 267 (SDLE…EGDV) and 278 to 293 (AQSE…EQGE). Residues 307–310 (RVRF) carry the Required for efficient binding to PPP1CA and for targeting PPP1CA to the nucleolus motif. Acidic residues predominate over residues 312 to 325 (EDEEKSENSSEDGD). Phosphoserine occurs at positions 317, 320, and 321. The MIF4G domain occupies 362–559 (KKHVKGLLNR…ETMLALKNND (198 aa)). The MI domain occupies 654 to 770 (DIRRNIFCTI…SLSILKVVEF (117 aa)).

This sequence belongs to the CWC22 family. May interact with EIF4A1, EIF4A2 and EIF4A3. Interacts with PPP1CA and PPP1CC. In terms of tissue distribution, expressed in heart and skeletal muscle.

The protein resides in the nucleus. The protein localises to the nucleolus. Its function is as follows. Plays a role in targeting PPP1CA to the nucleolus. This is Nucleolar MIF4G domain-containing protein 1 (NOM1) from Homo sapiens (Human).